Reading from the N-terminus, the 363-residue chain is 43 kDa protein (363 aa).

The polypeptide is 43 kDa protein (P43) (Lepidoptera (butterflies and moths)).